Consider the following 216-residue polypeptide: Large ribosomal subunit protein uL3 (216 aa).

Residues arginine 134 to glutamine 153 are disordered. N5-methylglutamine is present on glutamine 153.

The protein belongs to the universal ribosomal protein uL3 family. Part of the 50S ribosomal subunit. Forms a cluster with proteins L14 and L19. Post-translationally, methylated by PrmB.

One of the primary rRNA binding proteins, it binds directly near the 3'-end of the 23S rRNA, where it nucleates assembly of the 50S subunit. This chain is Large ribosomal subunit protein uL3, found in Cupriavidus pinatubonensis (strain JMP 134 / LMG 1197) (Cupriavidus necator (strain JMP 134)).